The chain runs to 357 residues: Uroporphyrinogen decarboxylase (357 aa).

Substrate is bound by residues 30 to 34, D79, Y154, S209, and H336; that span reads RQAGR.

It belongs to the uroporphyrinogen decarboxylase family. As to quaternary structure, homodimer.

It localises to the cytoplasm. The catalysed reaction is uroporphyrinogen III + 4 H(+) = coproporphyrinogen III + 4 CO2. The protein operates within porphyrin-containing compound metabolism; protoporphyrin-IX biosynthesis; coproporphyrinogen-III from 5-aminolevulinate: step 4/4. Its function is as follows. Catalyzes the decarboxylation of four acetate groups of uroporphyrinogen-III to yield coproporphyrinogen-III. This Mycobacterium leprae (strain Br4923) protein is Uroporphyrinogen decarboxylase.